The primary structure comprises 172 residues: RNA silencing suppressor p19 (172 aa).

Basic and acidic residues-rich tracts occupy residues 1–14 (MERA…REQA) and 150–172 (SERE…EESE). 2 disordered regions span residues 1-34 (MERA…KLPD) and 145-172 (LQPT…EESE).

The protein belongs to the tombusvirus protein p19 family. In terms of assembly, homodimer.

In terms of biological role, viral suppressor of RNA silencing which binds specifically to silencing RNAs (siRNAs). Acts as a molecular caliper to specifically select siRNAs based on the length of the duplex region of the RNA. This Cymbidium ringspot virus (CymRSV) protein is RNA silencing suppressor p19.